A 420-amino-acid polypeptide reads, in one-letter code: D-tagatose-1,6-bisphosphate aldolase subunit GatZ (420 aa).

It belongs to the GatZ/KbaZ family. GatZ subfamily. As to quaternary structure, forms a complex with GatY.

It participates in carbohydrate metabolism; D-tagatose 6-phosphate degradation; D-glyceraldehyde 3-phosphate and glycerone phosphate from D-tagatose 6-phosphate: step 2/2. Functionally, component of the tagatose-1,6-bisphosphate aldolase GatYZ that is required for full activity and stability of the Y subunit. Could have a chaperone-like function for the proper and stable folding of GatY. When expressed alone, GatZ does not show any aldolase activity. Is involved in the catabolism of galactitol. This is D-tagatose-1,6-bisphosphate aldolase subunit GatZ from Escherichia coli O6:K15:H31 (strain 536 / UPEC).